Here is a 163-residue protein sequence, read N- to C-terminus: Phosphopantetheine adenylyltransferase (163 aa).

Thr10 contributes to the substrate binding site. Residues 10 to 11 and His18 contribute to the ATP site; that span reads TF. Substrate is bound by residues Lys42, Leu74, and Arg88. ATP-binding positions include 89 to 91, Glu99, and 124 to 130; these read GLR and NSFISST.

Belongs to the bacterial CoaD family. Homohexamer. Mg(2+) is required as a cofactor.

It is found in the cytoplasm. It catalyses the reaction (R)-4'-phosphopantetheine + ATP + H(+) = 3'-dephospho-CoA + diphosphate. The protein operates within cofactor biosynthesis; coenzyme A biosynthesis; CoA from (R)-pantothenate: step 4/5. Functionally, reversibly transfers an adenylyl group from ATP to 4'-phosphopantetheine, yielding dephospho-CoA (dPCoA) and pyrophosphate. The protein is Phosphopantetheine adenylyltransferase of Shewanella baltica (strain OS223).